A 427-amino-acid polypeptide reads, in one-letter code: Gamma-glutamyl phosphate reductase (427 aa).

This sequence belongs to the gamma-glutamyl phosphate reductase family.

It is found in the cytoplasm. It carries out the reaction L-glutamate 5-semialdehyde + phosphate + NADP(+) = L-glutamyl 5-phosphate + NADPH + H(+). The protein operates within amino-acid biosynthesis; L-proline biosynthesis; L-glutamate 5-semialdehyde from L-glutamate: step 2/2. In terms of biological role, catalyzes the NADPH-dependent reduction of L-glutamate 5-phosphate into L-glutamate 5-semialdehyde and phosphate. The product spontaneously undergoes cyclization to form 1-pyrroline-5-carboxylate. This is Gamma-glutamyl phosphate reductase from Rhodospirillum rubrum (strain ATCC 11170 / ATH 1.1.1 / DSM 467 / LMG 4362 / NCIMB 8255 / S1).